Reading from the N-terminus, the 88-residue chain is Small ribosomal subunit protein bS20 (88 aa).

The tract at residues 1 to 25 is disordered; the sequence is MANSAQARKRARQATKARAHNASLR. The segment covering 7 to 19 has biased composition (basic residues); that stretch reads ARKRARQATKARA.

Belongs to the bacterial ribosomal protein bS20 family.

Binds directly to 16S ribosomal RNA. This is Small ribosomal subunit protein bS20 from Azoarcus sp. (strain BH72).